The chain runs to 211 residues: Large ribosomal subunit protein uL3 (211 aa).

The tract at residues 122–156 is disordered; it reads NQKRNNFGRGPMSHGSKNHRAPGSIGAGTTPGRVY.

Belongs to the universal ribosomal protein uL3 family. As to quaternary structure, part of the 50S ribosomal subunit. Forms a cluster with proteins L14 and L19.

Its function is as follows. One of the primary rRNA binding proteins, it binds directly near the 3'-end of the 23S rRNA, where it nucleates assembly of the 50S subunit. The sequence is that of Large ribosomal subunit protein uL3 from Nostoc sp. (strain PCC 7120 / SAG 25.82 / UTEX 2576).